The sequence spans 736 residues: MGNPENIEDAYVAVIRPKNTASLNSREYRAKSYEILLHEVPIEGQKKKRKKVLLETKLQGNSEITQGILDYVVETTKPISPANQGIRGKRVVLMKKFPLDGEKMGREASLFIVPSVVKDNTKYTYTPGCPIFYCLQDIMRVCSESSTHFATLTARMLIALDKWLDERHAQSHFIPALFRPSPLERIKTNVINPAYATESGQTENSLHMGYSALEIKSKMLALEKADTCIYNPLFGSDLQYTNRVDKVVINPYFGLGAPDYSKIQIPKQEKWQRSMSSVTEDKERQWVDDFPLHRSACEGDSELLSRLLSERFSVNQLDSDHWAPIHYACWYGKVEATRILLEKGKCNPNLLNGQLSSPLHFAAGGGHAEIVQILLNHPETDRHITDQQGRSPLNICEENKQNNWEEAAKLLKEAINKPYEKVRIYRMDGSYRSVELKHGNNTTVQQIMEGMRLSQETQQYFTIWICSENLSLQLKPYHKPLQHVRDWPEILAELTNLDPQRETPQLFLRRDVRLPLEVEKQIEDPLAILILFDEARYNLLKGFYTAPDAKLITLASLLLQIVYGNYESKKHKQGFLNEENLKSIVPVTKLKSKAPHWTNRILHEYKNLSTSEGVSKEMHHLQRMFLQNCWEIPTYGAAFFTGQIFTKASPSNHKVIPVYVGVNIKGLHLLNMETKALLISLKYGCFMWQLGDTDTCFQIHSMENKMSFIVHTKQAGLVVKLLMKLNGQLMPTERNS.

Positions 1–170 (MGNPENIEDA…DKWLDERHAQ (170 aa)) are N-terminal domain similar to Nudix hydrolase domain. An interaction with ITGB1BP1 region spans residues 172 to 195 (HFIPALFRPSPLERIKTNVINPAY). 4 ANK repeats span residues 287–316 (VDDF…SVNQ), 320–350 (DHWA…NPNL), 354–383 (QLSS…TDRH), and 388–419 (QGRS…NKPY). Residues 420–734 (EKVRIYRMDG…LNGQLMPTER (315 aa)) enclose the FERM domain. An interaction with RAP1B region spans residues 430-452 (SYRSVELKHGNNTTVQQIMEGMR).

In terms of assembly, interacts with CDH5. Found in a complex, at least composed of ITGB1BP1, KRIT1 and RAP1A. Interacts (via C-terminus FERM domain) with RAP1A (active GTP-bound form preferentially); the interaction does not induce the opening conformation of KRIT1. Interacts (via FERM domain) with RAP1B. Interacts (via N-terminus NPXY motif) with ITGB1BP1; the interaction induces the opening conformation of KRIT1 and competes with ITGB1 for ITGB1BP1 interaction. Interacts with HEG1 and CCM2; greatly facilitates CCM2-binding to HEG1. Associates (via N-terminus and C-terminus regions) with microtubules; the interaction is inhibited in presence of ITGB1BP1 and active GTP-bound RAP1A. In terms of tissue distribution, low levels in brain. Very weak expression found in heart and muscle.

The protein localises to the cytoplasm. It localises to the cytoskeleton. It is found in the cell membrane. The protein resides in the cell junction. In terms of biological role, component of the CCM signaling pathway which is a crucial regulator of heart and vessel formation and integrity. Negative regulator of angiogenesis. Inhibits endothelial proliferation, apoptosis, migration, lumen formation and sprouting angiogenesis in primary endothelial cells. Promotes AKT phosphorylation in a NOTCH-dependent and independent manner, and inhibits ERK1/2 phosphorylation indirectly through activation of the DELTA-NOTCH cascade. Acts in concert with CDH5 to establish and maintain correct endothelial cell polarity and vascular lumen and these effects are mediated by recruitment and activation of the Par polarity complex and RAP1B. Required for the localization of phosphorylated PRKCZ, PARD3, TIAM1 and RAP1B to the cell junction, and cell junction stabilization. Plays a role in integrin signaling via its interaction with ITGB1BP1; this prevents the interaction between ITGB1 and ITGB1BP1. Microtubule-associated protein that binds to phosphatidylinositol 4,5-bisphosphate (PIP2)-containing membranes in a GTP-bound RAP1-dependent manner. Plays an important role in the maintenance of the intracellular reactive oxygen species (ROS) homeostasis to prevent oxidative cellular damage. Regulates the homeostasis of intracellular ROS through an antioxidant pathway involving FOXO1 and SOD2. Facilitates the down-regulation of cyclin-D1 (CCND1) levels required for cell transition from proliferative growth to quiescence by preventing the accumulation of intracellular ROS through the modulation of FOXO1 and SOD2 levels. May play a role in the regulation of macroautophagy through the down-regulation of the mTOR pathway. This is Krev interaction trapped protein 1 (KRIT1) from Homo sapiens (Human).